The primary structure comprises 495 residues: Probable leucine aminopeptidase 2 (495 aa).

Residues 1–21 form the signal peptide; sequence MKSQLLSLAVAVTTISQGVVG. The PA domain maps to 130–216; it reads MAELVVAKNN…SQEDGKNLAT (87 aa). Residues Asn142 and Asn235 are each glycosylated (N-linked (GlcNAc...) asparagine). Zn(2+) contacts are provided by His259 and Asp271. The N-linked (GlcNAc...) asparagine glycan is linked to Asn272. Glu303 serves as the catalytic Proton acceptor. Residues Glu304 and Asp332 each coordinate Zn(2+). Residue Asn352 is glycosylated (N-linked (GlcNAc...) asparagine). His430 contacts Zn(2+).

It belongs to the peptidase M28 family. M28A subfamily. Monomer. Zn(2+) is required as a cofactor.

It is found in the secreted. Functionally, extracellular aminopeptidase that releases a wide variety of amino acids from natural peptides and contributes to pathogenicity. This chain is Probable leucine aminopeptidase 2 (LAP2), found in Trichophyton verrucosum (strain HKI 0517).